Here is a 149-residue protein sequence, read N- to C-terminus: Probable flagellum biosynthesis repressor protein FlbT (149 aa).

It belongs to the FlbT family.

Its function is as follows. Has a post-transcriptional repressor function in flagellum biogenesis. Associates with the 5'-UTR of fljK mRNA and promotes its degradation. In Allorhizobium ampelinum (strain ATCC BAA-846 / DSM 112012 / S4) (Agrobacterium vitis (strain S4)), this protein is Probable flagellum biosynthesis repressor protein FlbT.